The primary structure comprises 347 residues: Phenylalanine--tRNA ligase alpha subunit (347 aa).

E259 contacts Mg(2+).

It belongs to the class-II aminoacyl-tRNA synthetase family. Phe-tRNA synthetase alpha subunit type 1 subfamily. Tetramer of two alpha and two beta subunits. Mg(2+) serves as cofactor.

The protein resides in the cytoplasm. The catalysed reaction is tRNA(Phe) + L-phenylalanine + ATP = L-phenylalanyl-tRNA(Phe) + AMP + diphosphate + H(+). This Oenococcus oeni (strain ATCC BAA-331 / PSU-1) protein is Phenylalanine--tRNA ligase alpha subunit.